The following is a 254-amino-acid chain: Pyruvate dehydrogenase complex repressor (254 aa).

One can recognise an HTH gntR-type domain in the interval 9–77; it reads PKLSDVIEQQ…QGGGTFVQSS (69 aa). The segment at residues 37 to 56 is a DNA-binding region (H-T-H motif); that stretch reads ERELAKQFDVSRPSLREAIQ.

Functionally, transcriptional repressor for the pyruvate dehydrogenase complex genes aceEF and lpd. The polypeptide is Pyruvate dehydrogenase complex repressor (pdhR) (Escherichia coli O6:H1 (strain CFT073 / ATCC 700928 / UPEC)).